We begin with the raw amino-acid sequence, 475 residues long: Ankyrin repeat, SAM and basic leucine zipper domain-containing protein 1 (475 aa).

Positions 1 to 22 (MAAGALRGLPVAGGGESSESED) are disordered. Ser-17, Ser-18, and Ser-20 each carry phosphoserine. 6 ANK repeats span residues 45–74 (EKKE…SVDS), 78–107 (YGWT…NASF), 110–144 (DKQT…DPNV), 148–177 (RLMT…EVNT), 181–210 (NGYT…NKML), and 214–243 (DGKM…PLEG). The region spanning 272–334 (SYTAFGDLEV…KILATLKELQ (63 aa)) is the SAM domain.

In terms of assembly, interacts with DDX4, PIWIL1, RANBP9 and TDRD1.

The protein localises to the cytoplasm. Its function is as follows. Plays a central role during spermatogenesis by repressing transposable elements and preventing their mobilization, which is essential for the germline integrity. Acts via the piRNA metabolic process, which mediates the repression of transposable elements during meiosis by forming complexes composed of piRNAs and Piwi proteins and governs the methylation and subsequent repression of transposons. Its association with pi-bodies suggests a participation in the primary piRNAs metabolic process. Required prior to the pachytene stage to facilitate the production of multiple types of piRNAs, including those associated with repeats involved in the regulation of retrotransposons. May act by mediating protein-protein interactions during germ cell maturation. The chain is Ankyrin repeat, SAM and basic leucine zipper domain-containing protein 1 (ASZ1) from Colobus guereza (Mantled guereza).